We begin with the raw amino-acid sequence, 323 residues long: tRNA U34 carboxymethyltransferase (323 aa).

Carboxy-S-adenosyl-L-methionine contacts are provided by residues Lys-91, Trp-105, Lys-110, Gly-130, 152 to 154, 181 to 182, Met-196, Tyr-200, and Arg-315; these read DPT and IE.

This sequence belongs to the class I-like SAM-binding methyltransferase superfamily. CmoB family. As to quaternary structure, homotetramer.

The enzyme catalyses carboxy-S-adenosyl-L-methionine + 5-hydroxyuridine(34) in tRNA = 5-carboxymethoxyuridine(34) in tRNA + S-adenosyl-L-homocysteine + H(+). Functionally, catalyzes carboxymethyl transfer from carboxy-S-adenosyl-L-methionine (Cx-SAM) to 5-hydroxyuridine (ho5U) to form 5-carboxymethoxyuridine (cmo5U) at position 34 in tRNAs. This is tRNA U34 carboxymethyltransferase from Escherichia coli O139:H28 (strain E24377A / ETEC).